We begin with the raw amino-acid sequence, 300 residues long: Acetylglutamate kinase (300 aa).

Substrate contacts are provided by residues 72 to 73 (GG), arginine 94, and asparagine 197.

This sequence belongs to the acetylglutamate kinase family. ArgB subfamily.

The protein resides in the cytoplasm. The enzyme catalyses N-acetyl-L-glutamate + ATP = N-acetyl-L-glutamyl 5-phosphate + ADP. It functions in the pathway amino-acid biosynthesis; L-arginine biosynthesis; N(2)-acetyl-L-ornithine from L-glutamate: step 2/4. Catalyzes the ATP-dependent phosphorylation of N-acetyl-L-glutamate. The polypeptide is Acetylglutamate kinase (Azoarcus sp. (strain BH72)).